We begin with the raw amino-acid sequence, 103 residues long: c-Myc-binding protein (103 aa).

Belongs to the AMY1 family. As to quaternary structure, binds via its C-terminal region to the N-terminal region of MYC. Associates with AKAP1/S-AKAP84. Interacts with MYCBPAP. Interacts with CFAP91. In terms of tissue distribution, highly expressed in heart, placenta, pancreas, skeletal muscle and kidney. Also present at low levels in lung.

The protein localises to the cytoplasm. It localises to the nucleus. The protein resides in the mitochondrion. Its function is as follows. May control the transcriptional activity of MYC. Stimulates the activation of E box-dependent transcription by MYC. This Homo sapiens (Human) protein is c-Myc-binding protein.